Reading from the N-terminus, the 351-residue chain is Fructose-1,6-bisphosphatase class 1 1 (351 aa).

Mg(2+) contacts are provided by Glu-84, Asp-106, Leu-108, and Asp-109. Residues 109–112 (DGSS) and Asn-205 contribute to the substrate site. Glu-277 serves as a coordination point for Mg(2+).

The protein belongs to the FBPase class 1 family. As to quaternary structure, homotetramer. Mg(2+) is required as a cofactor.

It is found in the cytoplasm. The enzyme catalyses beta-D-fructose 1,6-bisphosphate + H2O = beta-D-fructose 6-phosphate + phosphate. Its pathway is carbohydrate biosynthesis; Calvin cycle. The protein is Fructose-1,6-bisphosphatase class 1 1 of Methylibium petroleiphilum (strain ATCC BAA-1232 / LMG 22953 / PM1).